An 831-amino-acid chain; its full sequence is von Willebrand factor A domain-containing protein DDB_G0285981 (831 aa).

A VIT domain is found at 60–188 (RDTFGLKTFS…NVTIHLTIIS (129 aa)). Residues 312-480 (EFIFLIDCSG…NFEEQVMKLV (169 aa)) form the VWFA domain.

The protein is von Willebrand factor A domain-containing protein DDB_G0285981 of Dictyostelium discoideum (Social amoeba).